We begin with the raw amino-acid sequence, 382 residues long: Sphingoid long-chain base transporter RSB1 (382 aa).

Over 1–34 (MSNATNNTLGSLLPQLEAAANSNSLYGGMVPNLR) the chain is Extracellular. N-linked (GlcNAc...) asparagine glycans are attached at residues asparagine 3 and asparagine 6. A helical transmembrane segment spans residues 35 to 55 (FNITMIVIWGILLTIHVVQLL). The Cytoplasmic segment spans residues 56–57 (MR). A helical membrane pass occupies residues 58-78 (QYWFSIAFICTGILEVLGFIG). At 79–90 (RTWSHSNVADMD) the chain is on the extracellular side. Residues 91 to 111 (AFLLNMICLTIAPVFTMGGIY) traverse the membrane as a helical segment. The Cytoplasmic portion of the chain corresponds to 112-135 (YQLAKLIEVYGHRFSLLPSPMAYS). Residues 136-156 (FIFICSDIVSLVVQAVGGGLC) traverse the membrane as a helical segment. Over 157–171 (GVAVTDGTSTTTGNH) the chain is Extracellular. Residues 172–192 (VFIAGLAIQVASMAIFLMLWF) traverse the membrane as a helical segment. Residues 193–241 (HFLFRIYISVRWEHINSRPISLSLLKISQTEVDYLYREKFHFLRLEPKR) are Cytoplasmic-facing. Residues 242 to 262 (WVFHYFNLAMTVAVLTIFTRC) traverse the membrane as a helical segment. Residues 263–281 (CYRLAELVVGWDGYLITHE) lie on the Extracellular side of the membrane. The chain crosses the membrane as a helical span at residues 282 to 302 (WYFIILDALMMAIATVTLTIF). At 303–382 (HPGFAFKGRS…LFSSKKKAKL (80 aa)) the chain is on the cytoplasmic side.

Belongs to the lipid-translocating exporter (LTE) (TC 9.A.26.1) family.

Its subcellular location is the cell membrane. Its function is as follows. Catalyzes the ATP-dependent translocation of sphingoid long-chain bases (LCBs) from the cytoplasmic site toward the extracytoplasmic side of the membrane (flip-flop). Involved in the establishment of the functional lipid asymmetry of the plasma membrane. Regulates intracellular levels of LCBs, sphingolipid precursors that are growth inhibitory at increased levels. This chain is Sphingoid long-chain base transporter RSB1 (RSB1), found in Saccharomyces cerevisiae (strain RM11-1a) (Baker's yeast).